The primary structure comprises 97 residues: Putative defensin-like protein 227 (97 aa).

Residues 1-26 (MKWATLFMVSCVLMFFVMNNINEVES) form the signal peptide. Cystine bridges form between C35–C97, C45–C76, C53–C91, and C74–C93.

The protein belongs to the DEFL family.

It is found in the secreted. The polypeptide is Putative defensin-like protein 227 (SCRL28) (Arabidopsis thaliana (Mouse-ear cress)).